A 600-amino-acid polypeptide reads, in one-letter code: Ligand-dependent nuclear receptor corepressor-like protein (600 aa).

3 disordered regions span residues 1–24 (MEKGTDRMAAAAPAPPAAASQCRS), 102–122 (SVIGSSQSTPTEELSSQGQSN), and 495–519 (DGTSENTEDSLDRKDNKQPRKKRGR). The span at 104–122 (IGSSQSTPTEELSSQGQSN) shows a compositional bias: polar residues. An HTH psq-type domain is found at 514–566 (RKKRGRYRQYDHEIMEEAIAMVMSGKMSVSKAQGIYGVPHSTLEYKVKERSGT). The H-T-H motif DNA-binding region spans 542–562 (VSKAQGIYGVPHSTLEYKVKE). Residues 581–600 (GLFNMTDSGTGSCKTSSKPV) are disordered. Over residues 583–600 (FNMTDSGTGSCKTSSKPV) the composition is skewed to polar residues.

Its subcellular location is the nucleus. Functionally, may act as transcription activator that binds DNA elements with the sequence 5'-CCCTATCGATCGATCTCTACCT-3'. In Gallus gallus (Chicken), this protein is Ligand-dependent nuclear receptor corepressor-like protein (LCORL).